Consider the following 84-residue polypeptide: Cell division topological specificity factor (84 aa).

It belongs to the MinE family.

Its function is as follows. Prevents the cell division inhibition by proteins MinC and MinD at internal division sites while permitting inhibition at polar sites. This ensures cell division at the proper site by restricting the formation of a division septum at the midpoint of the long axis of the cell. This is Cell division topological specificity factor from Pseudomonas putida (strain W619).